The following is a 497-amino-acid chain: Glutamyl-tRNA(Gln) amidotransferase subunit A (497 aa).

Residues Lys91 and Ser166 each act as charge relay system in the active site. The tract at residues 143–171 is disordered; it reads SSTENSAYGPTHNPWDLERTAGGSGGGSS. Ser190 functions as the Acyl-ester intermediate in the catalytic mechanism.

It belongs to the amidase family. GatA subfamily. In terms of assembly, heterotrimer of A, B and C subunits.

The enzyme catalyses L-glutamyl-tRNA(Gln) + L-glutamine + ATP + H2O = L-glutaminyl-tRNA(Gln) + L-glutamate + ADP + phosphate + H(+). Its function is as follows. Allows the formation of correctly charged Gln-tRNA(Gln) through the transamidation of misacylated Glu-tRNA(Gln) in organisms which lack glutaminyl-tRNA synthetase. The reaction takes place in the presence of glutamine and ATP through an activated gamma-phospho-Glu-tRNA(Gln). The protein is Glutamyl-tRNA(Gln) amidotransferase subunit A of Corynebacterium glutamicum (strain ATCC 13032 / DSM 20300 / JCM 1318 / BCRC 11384 / CCUG 27702 / LMG 3730 / NBRC 12168 / NCIMB 10025 / NRRL B-2784 / 534).